Reading from the N-terminus, the 864-residue chain is Probable M1 family aminopeptidase 1 (864 aa).

Substrate is bound by residues Glu149 and 289–293 (GAMEN). His325 provides a ligand contact to Zn(2+). Glu326 functions as the Proton acceptor in the catalytic mechanism. Zn(2+) is bound by residues His329 and Glu348.

This sequence belongs to the peptidase M1 family. It depends on Zn(2+) as a cofactor.

This chain is Probable M1 family aminopeptidase 1, found in Encephalitozoon cuniculi (strain GB-M1) (Microsporidian parasite).